We begin with the raw amino-acid sequence, 728 residues long: Catalase-peroxidase 1 (728 aa).

Residues 1-22 (MDKTQSSQGKCPVMHGANSAVA) form the signal peptide. The tryptophyl-tyrosyl-methioninium (Trp-Tyr) (with M-251) cross-link spans 97–225 (WHSAGTYRVA…LAAVMMGLIY (129 aa)). Residue H98 is the Proton acceptor of the active site. Positions 225-251 (YVNPEGVDGKPDPLRTAQDVRVTFARM) form a cross-link, tryptophyl-tyrosyl-methioninium (Tyr-Met) (with W-97). H266 provides a ligand contact to heme b.

This sequence belongs to the peroxidase family. Peroxidase/catalase subfamily. As to quaternary structure, homodimer or homotetramer. Heme b is required as a cofactor. Post-translationally, formation of the three residue Trp-Tyr-Met cross-link is important for the catalase, but not the peroxidase activity of the enzyme.

The catalysed reaction is H2O2 + AH2 = A + 2 H2O. It catalyses the reaction 2 H2O2 = O2 + 2 H2O. In terms of biological role, bifunctional enzyme with both catalase and broad-spectrum peroxidase activity. The polypeptide is Catalase-peroxidase 1 (Shewanella sp. (strain MR-4)).